Consider the following 305-residue polypeptide: uncharacterized protein (305 aa).

Transmembrane regions (helical) follow at residues 52-72, 89-109, and 120-140; these read TINL…SKII, IAGF…FIAA, and VIAI…GSLS.

The protein belongs to the MscS (TC 1.A.23) family.

It localises to the cell membrane. This is an uncharacterized protein from Buchnera aphidicola subsp. Acyrthosiphon pisum (strain APS) (Acyrthosiphon pisum symbiotic bacterium).